The following is a 42-amino-acid chain: Photosystem I reaction center subunit IX (42 aa).

A helical transmembrane segment spans residues 7–27 (YLSTAPVLATLWFGFLAGLLI).

This sequence belongs to the PsaJ family.

The protein resides in the plastid. The protein localises to the chloroplast thylakoid membrane. Its function is as follows. May help in the organization of the PsaE and PsaF subunits. In Psilotum nudum (Whisk fern), this protein is Photosystem I reaction center subunit IX.